The following is a 448-amino-acid chain: uncharacterized protein (448 aa).

At lysine 280 the chain carries N6-(pyridoxal phosphate)lysine.

It belongs to the class-III pyridoxal-phosphate-dependent aminotransferase family.

It is found in the cytoplasm. Its subcellular location is the mitochondrion. This is an uncharacterized protein from Schizosaccharomyces pombe (strain 972 / ATCC 24843) (Fission yeast).